The following is a 204-amino-acid chain: Small ribosomal subunit protein uS4 (204 aa).

The segment at 1 to 49 is disordered; it reads MSKRKSAKYKLDRRMGENIWGRPNSPVNKRSYGPGQHGQRRKGKTSDFG. In terms of domain architecture, S4 RNA-binding spans 94-154; the sequence is QRLDMVVYRA…NKAKEMALVI (61 aa).

It belongs to the universal ribosomal protein uS4 family. Part of the 30S ribosomal subunit. Contacts protein S5. The interaction surface between S4 and S5 is involved in control of translational fidelity.

In terms of biological role, one of the primary rRNA binding proteins, it binds directly to 16S rRNA where it nucleates assembly of the body of the 30S subunit. Its function is as follows. With S5 and S12 plays an important role in translational accuracy. The polypeptide is Small ribosomal subunit protein uS4 (Erythrobacter litoralis (strain HTCC2594)).